A 212-amino-acid chain; its full sequence is Pyridoxine/pyridoxamine 5'-phosphate oxidase (212 aa).

Residues 8-11 and lysine 66 contribute to the substrate site; that span reads RREY. Residues 61–66, 76–77, arginine 82, lysine 83, and glutamine 105 each bind FMN; these read RIVLLK and FT. Substrate-binding residues include tyrosine 123, arginine 127, and serine 131. FMN-binding positions include 140 to 141 and tryptophan 185; that span reads QS. 191-193 contacts substrate; it reads RLH. An FMN-binding site is contributed by arginine 195.

It belongs to the pyridoxamine 5'-phosphate oxidase family. Homodimer. Requires FMN as cofactor.

It carries out the reaction pyridoxamine 5'-phosphate + O2 + H2O = pyridoxal 5'-phosphate + H2O2 + NH4(+). It catalyses the reaction pyridoxine 5'-phosphate + O2 = pyridoxal 5'-phosphate + H2O2. It participates in cofactor metabolism; pyridoxal 5'-phosphate salvage; pyridoxal 5'-phosphate from pyridoxamine 5'-phosphate: step 1/1. It functions in the pathway cofactor metabolism; pyridoxal 5'-phosphate salvage; pyridoxal 5'-phosphate from pyridoxine 5'-phosphate: step 1/1. Functionally, catalyzes the oxidation of either pyridoxine 5'-phosphate (PNP) or pyridoxamine 5'-phosphate (PMP) into pyridoxal 5'-phosphate (PLP). This is Pyridoxine/pyridoxamine 5'-phosphate oxidase from Shewanella denitrificans (strain OS217 / ATCC BAA-1090 / DSM 15013).